We begin with the raw amino-acid sequence, 405 residues long: Intraflagellar transport protein 57 homolog (405 aa).

Residues 252–380 (ETLKTNILEN…AQLNLEVALL (129 aa)) adopt a coiled-coil conformation.

The protein belongs to the IFT57 family.

Its subcellular location is the cytoplasm. The protein localises to the cytoskeleton. It is found in the cilium basal body. Required for the formation of cilia. The chain is Intraflagellar transport protein 57 homolog from Drosophila melanogaster (Fruit fly).